A 475-amino-acid polypeptide reads, in one-letter code: BTB/POZ domain-containing protein 10 (475 aa).

A disordered region spans residues 1 to 144 (MAGRPHPYDS…SQSSSDGSCK (144 aa)). Basic residues predominate over residues 22–31 (LHSRPRKLYK). A compositionally biased stretch (basic and acidic residues) spans 57-80 (GHERSRDRRRSSDRSRDSSHERAE). Residues 81–94 (SQLTPCIRNVTSPT) are compositionally biased toward polar residues. The segment covering 97–107 (HHIEREKDHSS) has biased composition (basic and acidic residues). A compositionally biased stretch (low complexity) spans 108 to 144 (SRPSSPRPQRASPNGSMSSAGNSSRNSSQSSSDGSCK). The interval 146–475 (SGEMVFVYEN…LDPDAQNPML (330 aa)) is interaction with AKT family members. The region spanning 167 to 241 (ERVTLIVDNT…YKTGIIRCPD (75 aa)) is the BTB domain. Residues 451–475 (ELDILPSHPASGNNDLDPDAQNPML) are disordered.

In terms of assembly, interacts (via C-terminal 330-amino-acid region) with AKT1; AKT2 and AKT3. Interacts with PPP2CA and PPP1CA. Ubiquitously expressed (at protein level).

The protein localises to the nucleus. It is found in the cytoplasm. In terms of biological role, plays a major role as an activator of AKT family members by inhibiting PPP2CA-mediated dephosphorylation, thereby keeping AKTs activated. Plays a role in preventing motor neuronal death and in accelerating the growth of pancreatic beta cells. The polypeptide is BTB/POZ domain-containing protein 10 (Btbd10) (Mus musculus (Mouse)).